Consider the following 639-residue polypeptide: Chaperone protein DnaK (639 aa).

Thr196 is modified (phosphothreonine; by autocatalysis). The segment at 592–639 (ASSLYQTPDAGAPGASGPSAGGEPETGKKGGDGEVQNAEYEVIDGNDK) is disordered. Positions 601–613 (AGAPGASGPSAGG) are enriched in low complexity.

This sequence belongs to the heat shock protein 70 family.

In terms of biological role, acts as a chaperone. This chain is Chaperone protein DnaK, found in Chlorobium limicola (strain DSM 245 / NBRC 103803 / 6330).